The sequence spans 202 residues: MPIEISANSRNLHGTGANRRLRIQGRLPGVIYGGGGTAQPIDLDHKDLYYKLKTDVFHASILSINVDGKKEQVLLRDVQMHPFKQQVLHIDFQRIRQDQKIHVKVPLHFINADIAPGVKLSGGMISHVATEIEISCLPKDLPESITVDLSEMTAGSILHTSDLKLPENVEIPALLRGDNQPVSTLIMPRGGEVADESGEESA.

Belongs to the bacterial ribosomal protein bL25 family. CTC subfamily. Part of the 50S ribosomal subunit; part of the 5S rRNA/L5/L18/L25 subcomplex. Contacts the 5S rRNA. Binds to the 5S rRNA independently of L5 and L18.

Its function is as follows. This is one of the proteins that binds to the 5S RNA in the ribosome where it forms part of the central protuberance. The protein is Large ribosomal subunit protein bL25 of Nitrosomonas eutropha (strain DSM 101675 / C91 / Nm57).